The following is a 146-amino-acid chain: Large ribosomal subunit protein uL24 (146 aa).

Residues 1 to 33 (MKYNPRVTSSRRRNRKPHFTASSSERRVXMSSP) are disordered. Over residues 9–18 (SSRRRNRKPH) the composition is skewed to basic residues.

This sequence belongs to the universal ribosomal protein uL24 family.

This is Large ribosomal subunit protein uL24 (RPL26) from Brassica campestris (Field mustard).